A 310-amino-acid polypeptide reads, in one-letter code: Acetyl-coenzyme A carboxylase carboxyl transferase subunit beta (310 aa).

Residues 27–296 (LWKKCPKCSA…PEFENEEELE (270 aa)) form the CoA carboxyltransferase N-terminal domain. Positions 31, 34, 50, and 53 each coordinate Zn(2+). Residues 31 to 53 (CPKCSAVLYRPELEKNLDVCPKC) form a C4-type zinc finger. The disordered stretch occupies residues 285–310 (PEPEFENEEELEEEEMERPEPPDNVE). Positions 287–310 (PEFENEEELEEEEMERPEPPDNVE) are enriched in acidic residues.

This sequence belongs to the AccD/PCCB family. Acetyl-CoA carboxylase is a heterohexamer composed of biotin carboxyl carrier protein (AccB), biotin carboxylase (AccC) and two subunits each of ACCase subunit alpha (AccA) and ACCase subunit beta (AccD). The cofactor is Zn(2+).

It is found in the cytoplasm. It catalyses the reaction N(6)-carboxybiotinyl-L-lysyl-[protein] + acetyl-CoA = N(6)-biotinyl-L-lysyl-[protein] + malonyl-CoA. It participates in lipid metabolism; malonyl-CoA biosynthesis; malonyl-CoA from acetyl-CoA: step 1/1. In terms of biological role, component of the acetyl coenzyme A carboxylase (ACC) complex. Biotin carboxylase (BC) catalyzes the carboxylation of biotin on its carrier protein (BCCP) and then the CO(2) group is transferred by the transcarboxylase to acetyl-CoA to form malonyl-CoA. The chain is Acetyl-coenzyme A carboxylase carboxyl transferase subunit beta from Hahella chejuensis (strain KCTC 2396).